The chain runs to 283 residues: Mau operon transcriptional activator (283 aa).

The region spanning 1–58 is the HTH lysR-type domain; that stretch reads MNWDDLRVVAAINRCGSFNRAAKMLNVEETTIARRLARLEGSLGCVLFQAVDGQRRPT. Residues 18 to 37 constitute a DNA-binding region (H-T-H motif); sequence FNRAAKMLNVEETTIARRLA.

Belongs to the LysR transcriptional regulatory family.

In terms of biological role, transcriptional activator of the mau genes involved in methylamine metabolism. The protein is Mau operon transcriptional activator (mauR) of Paracoccus denitrificans.